Consider the following 689-residue polypeptide: Glycine--tRNA ligase beta subunit (689 aa).

The protein belongs to the class-II aminoacyl-tRNA synthetase family. Tetramer of two alpha and two beta subunits.

It is found in the cytoplasm. The catalysed reaction is tRNA(Gly) + glycine + ATP = glycyl-tRNA(Gly) + AMP + diphosphate. The sequence is that of Glycine--tRNA ligase beta subunit from Coxiella burnetii (strain RSA 331 / Henzerling II).